Consider the following 433-residue polypeptide: MSTPSRSAALFERAQKTIPGGVNSPVRAFRSVGGIPRFIAKAAGPYLWDADGTRYIDYVGSWGPMIVGHAHPEVVRAVQEVAADSFSFGAPTEAEVVMAEEICKLVPSIEQVRLVSSGTEATMSALRLARGFTGRDLIVKFEGCYHGHADSLLVKAGSGLLTFADTTQNAPSSTGVPEDVVKHTMVLPYNDVAALREAFARHGKEIAAVIVEPVAGNMNLVRGSNEFHQAMRALCTEHGAVLIFDEVMTGFRVALGCAQALYGIKPDLTCLGKVIGGGMPAAAFGGRRDIMGFLAPLGSVYQAGTLSGNPLAVAAGLTTLRLIAAEGFHDRLATQTRKLVDGLAEIAREVGVPFAADSVGGMFGIYFREGVPTSFAEVTKSDVGRFNAFFHAMLDQGVYLAPSAFEAGFVSSTHDDAILDATFEAARKAFKAV.

At lysine 273 the chain carries N6-(pyridoxal phosphate)lysine.

It belongs to the class-III pyridoxal-phosphate-dependent aminotransferase family. HemL subfamily. As to quaternary structure, homodimer. Pyridoxal 5'-phosphate serves as cofactor.

The protein resides in the cytoplasm. It carries out the reaction (S)-4-amino-5-oxopentanoate = 5-aminolevulinate. It participates in porphyrin-containing compound metabolism; protoporphyrin-IX biosynthesis; 5-aminolevulinate from L-glutamyl-tRNA(Glu): step 2/2. This is Glutamate-1-semialdehyde 2,1-aminomutase from Ralstonia pickettii (strain 12J).